Reading from the N-terminus, the 243-residue chain is Orotidine 5'-phosphate decarboxylase (243 aa).

Substrate contacts are provided by residues aspartate 19, lysine 41, 69-78 (DLKFFDIPAT), threonine 124, arginine 185, glutamine 194, glycine 214, and arginine 215. Catalysis depends on lysine 71, which acts as the Proton donor.

It belongs to the OMP decarboxylase family. Type 1 subfamily. As to quaternary structure, homodimer.

The enzyme catalyses orotidine 5'-phosphate + H(+) = UMP + CO2. Its pathway is pyrimidine metabolism; UMP biosynthesis via de novo pathway; UMP from orotate: step 2/2. In terms of biological role, catalyzes the decarboxylation of orotidine 5'-monophosphate (OMP) to uridine 5'-monophosphate (UMP). This chain is Orotidine 5'-phosphate decarboxylase, found in Xanthomonas campestris pv. campestris (strain 8004).